Consider the following 688-residue polypeptide: Glycine--tRNA ligase beta subunit (688 aa).

It belongs to the class-II aminoacyl-tRNA synthetase family. Tetramer of two alpha and two beta subunits.

The protein resides in the cytoplasm. The enzyme catalyses tRNA(Gly) + glycine + ATP = glycyl-tRNA(Gly) + AMP + diphosphate. This is Glycine--tRNA ligase beta subunit from Haemophilus influenzae (strain PittGG).